The sequence spans 286 residues: Putative transcription factor kapC (286 aa).

Residues 1–10 (MQPALAPAPH) show a composition bias toward pro residues. Positions 1 to 120 (MQPALAPAPH…QNRAAQRAFR (120 aa)) are disordered. Positions 26-40 (HDQLLAAHQHLSHPQ) are enriched in low complexity. Residues 41–54 (QPRPQAPATQPPHM) are compositionally biased toward pro residues. Polar residues predominate over residues 55 to 67 (QPNTASPRDQNNI). The span at 81-92 (PQTPPQPEPAPQ) shows a compositional bias: pro residues. The bZIP domain occupies 102 to 165 (PLSTSKRAAQ…EYIINLQTRL (64 aa)). The segment at 103–126 (LSTSKRAAQNRAAQRAFRQRKESY) is basic motif. Low complexity predominate over residues 108–118 (RAAQNRAAQRA). Residues 130–161 (LEEQVKHQEAITEEYKALHAENYQLREYIINL) form a leucine-zipper region. Residues 197–286 (RGNAASAGPA…QEPDGLPVVS (90 aa)) are disordered. A compositionally biased stretch (low complexity) spans 198 to 222 (GNAASAGPAPAGPGPQQSQPNQNQG).

It belongs to the bZIP family.

It is found in the nucleus. Putative transcription factor. The polypeptide is Putative transcription factor kapC (kapC) (Aspergillus terreus (strain NIH 2624 / FGSC A1156)).